The following is a 541-amino-acid chain: Glucose-6-phosphate isomerase (541 aa).

Catalysis depends on E354, which acts as the Proton donor. Catalysis depends on residues H385 and K505.

The protein belongs to the GPI family.

The protein localises to the cytoplasm. It catalyses the reaction alpha-D-glucose 6-phosphate = beta-D-fructose 6-phosphate. The protein operates within carbohydrate biosynthesis; gluconeogenesis. It participates in carbohydrate degradation; glycolysis; D-glyceraldehyde 3-phosphate and glycerone phosphate from D-glucose: step 2/4. Functionally, catalyzes the reversible isomerization of glucose-6-phosphate to fructose-6-phosphate. This is Glucose-6-phosphate isomerase from Cupriavidus metallidurans (strain ATCC 43123 / DSM 2839 / NBRC 102507 / CH34) (Ralstonia metallidurans).